The primary structure comprises 94 residues: Pyrimidine/purine nucleoside phosphorylase (94 aa).

The protein belongs to the nucleoside phosphorylase PpnP family.

The enzyme catalyses a purine D-ribonucleoside + phosphate = a purine nucleobase + alpha-D-ribose 1-phosphate. The catalysed reaction is adenosine + phosphate = alpha-D-ribose 1-phosphate + adenine. It catalyses the reaction cytidine + phosphate = cytosine + alpha-D-ribose 1-phosphate. It carries out the reaction guanosine + phosphate = alpha-D-ribose 1-phosphate + guanine. The enzyme catalyses inosine + phosphate = alpha-D-ribose 1-phosphate + hypoxanthine. The catalysed reaction is thymidine + phosphate = 2-deoxy-alpha-D-ribose 1-phosphate + thymine. It catalyses the reaction uridine + phosphate = alpha-D-ribose 1-phosphate + uracil. It carries out the reaction xanthosine + phosphate = alpha-D-ribose 1-phosphate + xanthine. Functionally, catalyzes the phosphorolysis of diverse nucleosides, yielding D-ribose 1-phosphate and the respective free bases. Can use uridine, adenosine, guanosine, cytidine, thymidine, inosine and xanthosine as substrates. Also catalyzes the reverse reactions. This is Pyrimidine/purine nucleoside phosphorylase from Salmonella typhimurium (strain LT2 / SGSC1412 / ATCC 700720).